A 129-amino-acid chain; its full sequence is Large ribosomal subunit protein eL32 (129 aa).

This sequence belongs to the eukaryotic ribosomal protein eL32 family.

The sequence is that of Large ribosomal subunit protein eL32 (rpl32e) from Archaeoglobus fulgidus (strain ATCC 49558 / DSM 4304 / JCM 9628 / NBRC 100126 / VC-16).